The chain runs to 366 residues: MVIKFLSALILLLVTTAAQAERIRDLTSVQGVRQNSLIGYGLVVGLDGTGDQTTQTPFTTQTLNNMLSQLGITVPTGTNMQLKNVAAVMVTASLPPFGRQGQTIDVVVSSMGNAKSLRGGTLLMTPLKGVDSQVYALAQGNILVGGAGASAGGSSVQVNQLNGGRITNGAVIERELPSQFGVGNTLNLQLNDEDFSMAQQIADTINRVRGYGSATALDARAIQVRVPSGNSSQVRFLADIQNMQVNVTPQDAKVVINSRTGSVVMNREVTLDSCAVAQGNLSVTVNRQANVSQPDTPFGGGQTVVTPQTQIDLRQSGGSLQSVRSSASLNNVVRALNALGATPMDLMSILQSMQSAGCLRAKLEII.

Residues 1-20 form the signal peptide; the sequence is MVIKFLSALILLLVTTAAQA.

This sequence belongs to the FlgI family. In terms of assembly, the basal body constitutes a major portion of the flagellar organelle and consists of four rings (L,P,S, and M) mounted on a central rod.

The protein resides in the periplasm. It is found in the bacterial flagellum basal body. Assembles around the rod to form the L-ring and probably protects the motor/basal body from shearing forces during rotation. In Escherichia coli (strain SE11), this protein is Flagellar P-ring protein.